A 288-amino-acid polypeptide reads, in one-letter code: Polyketide biosynthesis malonyl CoA-acyl carrier protein transacylase PksC (288 aa).

Active-site residues include Ser-87 and His-193.

It belongs to the FabD family.

It localises to the cytoplasm. It carries out the reaction holo-[ACP] + malonyl-CoA = malonyl-[ACP] + CoA. Its pathway is antibiotic biosynthesis; bacillaene biosynthesis. Involved in some intermediate steps for the synthesis of the antibiotic polyketide bacillaene which is involved in secondary metabolism. It catalyzes the transfer of the malonyl-CoA group to the acyl-carrier-protein AcpK (Mal-AcpK). This Bacillus subtilis (strain 168) protein is Polyketide biosynthesis malonyl CoA-acyl carrier protein transacylase PksC (pksC).